The following is a 792-amino-acid chain: Phenylalanine--tRNA ligase beta subunit (792 aa).

Residues 40–156 form the tRNA-binding domain; that stretch reads FPRTENLIVG…AKLNDIDPLK (117 aa). The 69-residue stretch at 404-472 folds into the B5 domain; sequence LKDNLIDFDS…KKINVNNLEL (69 aa). Positions 450, 456, 459, and 460 each coordinate Mg(2+).

It belongs to the phenylalanyl-tRNA synthetase beta subunit family. Type 1 subfamily. As to quaternary structure, tetramer of two alpha and two beta subunits. Mg(2+) is required as a cofactor.

It localises to the cytoplasm. The catalysed reaction is tRNA(Phe) + L-phenylalanine + ATP = L-phenylalanyl-tRNA(Phe) + AMP + diphosphate + H(+). The sequence is that of Phenylalanine--tRNA ligase beta subunit from Malacoplasma penetrans (strain HF-2) (Mycoplasma penetrans).